A 208-amino-acid chain; its full sequence is Probable GTP-binding protein EngB (208 aa).

An EngB-type G domain is found at 23–205; sequence LTSEMVILGR…RQTLLKYLLT (183 aa). GTP is bound by residues 31–38, 57–61, 84–87, 154–157, and 182–184; these read GRSNVGKS, GKTRL, DLPG, TKFD, and FNA. Mg(2+) contacts are provided by S38 and T59.

The protein belongs to the TRAFAC class TrmE-Era-EngA-EngB-Septin-like GTPase superfamily. EngB GTPase family. Requires Mg(2+) as cofactor.

Necessary for normal cell division and for the maintenance of normal septation. This chain is Probable GTP-binding protein EngB, found in Helicobacter pylori (strain Shi470).